Reading from the N-terminus, the 83-residue chain is Small cysteine-rich protein 3 (83 aa).

An N-terminal signal peptide occupies residues 1–21 (MGVKLNICLLLLLVAIISSQG). A propeptide spanning residues 22–39 (FNLRKKEDSKDEKPFGNY) is cleaved from the precursor. Basic and acidic residues predominate over residues 25–35 (RKKEDSKDEKP). The tract at residues 25–44 (RKKEDSKDEKPFGNYRRGSP) is disordered.

Belongs to the Cnidaria small cysteine-rich protein (SCRiP) family. alpha subfamily. In terms of processing, contains 4 disulfide bonds.

It is found in the secreted. It localises to the nematocyst. Functionally, this recombinant protein induces severe neurotoxicity on zebrafish larvae (Danio rerio) at a concentration of 230 mg/ml, but does not show toxicity when injected in blowfly larvae (Sarcophaga falculata). All fish incubated with this protein died within 16 hours of exposure. Has also been claimed to be implied in calcification, but this function seems improbable. This Acropora millepora (Staghorn coral) protein is Small cysteine-rich protein 3.